A 530-amino-acid polypeptide reads, in one-letter code: Chaperonin GroEL 2 (530 aa).

ATP is bound by residues 30-33 (TLGP), lysine 51, 87-91 (DGTTT), glycine 415, 479-481 (NAA), and aspartate 495.

The protein belongs to the chaperonin (HSP60) family. In terms of assembly, forms a cylinder of 14 subunits composed of two heptameric rings stacked back-to-back. Interacts with the co-chaperonin GroES.

It localises to the cytoplasm. The enzyme catalyses ATP + H2O + a folded polypeptide = ADP + phosphate + an unfolded polypeptide.. Together with its co-chaperonin GroES, plays an essential role in assisting protein folding. The GroEL-GroES system forms a nano-cage that allows encapsulation of the non-native substrate proteins and provides a physical environment optimized to promote and accelerate protein folding. The sequence is that of Chaperonin GroEL 2 from Vibrio cholerae serotype O1 (strain ATCC 39315 / El Tor Inaba N16961).